Here is a 750-residue protein sequence, read N- to C-terminus: 3-isopropylmalate dehydratase (750 aa).

Residues Cys353, Cys413, and Cys416 each contribute to the [4Fe-4S] cluster site. Residues 492–524 are disordered; the sequence is KYDGSPEVFKSTQDTTPAVKPPQPASDSSSSGG.

This sequence belongs to the aconitase/IPM isomerase family. Monomer. The cofactor is [4Fe-4S] cluster.

The enzyme catalyses (2R,3S)-3-isopropylmalate = (2S)-2-isopropylmalate. Its pathway is amino-acid biosynthesis; L-leucine biosynthesis; L-leucine from 3-methyl-2-oxobutanoate: step 2/4. Functionally, catalyzes the isomerization between 2-isopropylmalate and 3-isopropylmalate, via the formation of 2-isopropylmaleate. The protein is 3-isopropylmalate dehydratase (LEU1) of Rhizopus niveus.